The chain runs to 145 residues: MNSKKKIALVAHDNRKKALISWCEANSEVLSNHSLCGTGTTAKLIKEATGLEVFPYKSGPMGGDQQIGAAIVNEDIDFMIFFWDPLTAQPHDPDVKALLRISVLYDIPIAMNESTAEFLIKSPIMKEQHERHIIDYYQKIRKDNF.

An MGS-like domain is found at 1–145 (MNSKKKIALV…YYQKIRKDNF (145 aa)). Substrate is bound by residues histidine 12, lysine 16, 38–41 (TGTT), and 58–59 (SG). Catalysis depends on aspartate 64, which acts as the Proton donor/acceptor. Histidine 91 contacts substrate.

Belongs to the methylglyoxal synthase family.

The catalysed reaction is dihydroxyacetone phosphate = methylglyoxal + phosphate. Its function is as follows. Catalyzes the formation of methylglyoxal from dihydroxyacetone phosphate. This is Methylglyoxal synthase from Clostridium acetobutylicum (strain ATCC 824 / DSM 792 / JCM 1419 / IAM 19013 / LMG 5710 / NBRC 13948 / NRRL B-527 / VKM B-1787 / 2291 / W).